The chain runs to 303 residues: Geranylgeranyl pyrophosphate synthase (303 aa).

Residues Lys32, Arg35, and His64 each contribute to the isopentenyl diphosphate site. Positions 71 and 75 each coordinate Mg(2+). Position 80 (Arg80) interacts with dimethylallyl diphosphate. Residue Arg81 participates in isopentenyl diphosphate binding. Dimethylallyl diphosphate is bound by residues Lys158, Thr159, Gln192, Lys209, and Lys219.

This sequence belongs to the FPP/GGPP synthase family. Homooligomer. Mg(2+) serves as cofactor.

Its subcellular location is the cytoplasm. The enzyme catalyses isopentenyl diphosphate + dimethylallyl diphosphate = (2E)-geranyl diphosphate + diphosphate. It catalyses the reaction isopentenyl diphosphate + (2E)-geranyl diphosphate = (2E,6E)-farnesyl diphosphate + diphosphate. The catalysed reaction is isopentenyl diphosphate + (2E,6E)-farnesyl diphosphate = (2E,6E,10E)-geranylgeranyl diphosphate + diphosphate. It participates in isoprenoid biosynthesis; farnesyl diphosphate biosynthesis; farnesyl diphosphate from geranyl diphosphate and isopentenyl diphosphate: step 1/1. It functions in the pathway isoprenoid biosynthesis; geranyl diphosphate biosynthesis; geranyl diphosphate from dimethylallyl diphosphate and isopentenyl diphosphate: step 1/1. Its pathway is isoprenoid biosynthesis; geranylgeranyl diphosphate biosynthesis; geranylgeranyl diphosphate from farnesyl diphosphate and isopentenyl diphosphate: step 1/1. Catalyzes the trans-addition of the three molecules of IPP onto DMAPP to form geranylgeranyl pyrophosphate, an important precursor of carotenoids and geranylated proteins. The sequence is that of Geranylgeranyl pyrophosphate synthase (ggps1) from Dictyostelium discoideum (Social amoeba).